A 397-amino-acid chain; its full sequence is 3-ketoacyl-CoA thiolase, mitochondrial (397 aa).

The N-terminal 16 residues, 1-16 (MALLRGVFVVAAKRTP), are a transit peptide targeting the mitochondrion; not cleaved. Lys-25 is modified (N6-acetyllysine; alternate). Position 25 is an N6-succinyllysine; alternate (Lys-25). At Lys-45 the chain carries N6-succinyllysine. Cys-92 serves as the catalytic Acyl-thioester intermediate. Thr-119 is subject to Phosphothreonine. Ser-121 carries the phosphoserine modification. Tyr-127 carries the post-translational modification Phosphotyrosine. Thr-136 carries the phosphothreonine modification. Lys-137 carries the N6-acetyllysine; alternate modification. Lys-137 bears the N6-succinyllysine; alternate mark. A Phosphoserine modification is found at Ser-140. An N6-acetyllysine; alternate mark is found at Lys-143, Lys-171, Lys-191, and Lys-209. 4 positions are modified to N6-succinyllysine; alternate: Lys-143, Lys-171, Lys-191, and Lys-209. Lys-211, Lys-212, and Lys-214 each carry N6-succinyllysine. CoA contacts are provided by Arg-224 and Thr-227. Lys-234 carries the N6-acetyllysine; alternate modification. The residue at position 234 (Lys-234) is an N6-succinyllysine; alternate. Lys-240 is subject to N6-succinyllysine. At Lys-241 the chain carries N6-acetyllysine. Ser-251 contributes to the CoA binding site. N6-acetyllysine is present on residues Lys-269 and Lys-270. Lys-305 is subject to N6-acetyllysine; alternate. Lys-305 is modified (N6-succinyllysine; alternate). The residue at position 310 (Ser-310) is a Phosphoserine. At Lys-312 the chain carries N6-acetyllysine; alternate. Lys-312 is modified (N6-succinyllysine; alternate). Residue Ser-333 is modified to Phosphoserine. Residues Lys-340 and Lys-375 each carry the N6-acetyllysine modification. Cys-382 acts as the Proton donor/acceptor in catalysis.

The protein belongs to the thiolase-like superfamily. Thiolase family. As to quaternary structure, homotetramer. Interacts with BNIP3.

It localises to the mitochondrion. It carries out the reaction an acyl-CoA + acetyl-CoA = a 3-oxoacyl-CoA + CoA. It catalyses the reaction 2 acetyl-CoA = acetoacetyl-CoA + CoA. The catalysed reaction is acetyl-CoA + H2O = acetate + CoA + H(+). The enzyme catalyses propanoyl-CoA + H2O = propanoate + CoA + H(+). It carries out the reaction butanoyl-CoA + H2O = butanoate + CoA + H(+). It catalyses the reaction hexanoyl-CoA + H2O = hexanoate + CoA + H(+). The catalysed reaction is octanoyl-CoA + H2O = octanoate + CoA + H(+). The enzyme catalyses decanoyl-CoA + H2O = decanoate + CoA + H(+). It carries out the reaction dodecanoyl-CoA + H2O = dodecanoate + CoA + H(+). It catalyses the reaction tetradecanoyl-CoA + H2O = tetradecanoate + CoA + H(+). The catalysed reaction is hexadecanoyl-CoA + H2O = hexadecanoate + CoA + H(+). It participates in lipid metabolism; fatty acid beta-oxidation. Functionally, in the production of energy from fats, this is one of the enzymes that catalyzes the last step of the mitochondrial beta-oxidation pathway, an aerobic process breaking down fatty acids into acetyl-CoA. Using free coenzyme A/CoA, catalyzes the thiolytic cleavage of medium- to long-chain unbranched 3-oxoacyl-CoAs into acetyl-CoA and a fatty acyl-CoA shortened by two carbon atoms. Also catalyzes the condensation of two acetyl-CoA molecules into acetoacetyl-CoA and could be involved in the production of ketone bodies. Also displays hydrolase activity on various fatty acyl-CoAs. Thereby, could be responsible for the production of acetate in a side reaction to beta-oxidation. Abolishes BNIP3-mediated apoptosis and mitochondrial damage. The chain is 3-ketoacyl-CoA thiolase, mitochondrial (ACAA2) from Homo sapiens (Human).